The sequence spans 853 residues: WEB family protein At5g16730, chloroplastic (853 aa).

Low complexity-rich tracts occupy residues 1 to 27 (MASK…PATP) and 36 to 49 (KSET…STTT). A chloroplast-targeting transit peptide spans 1 to 84 (MASKTKTSLS…PTPPEKSQAR (84 aa)). Disordered regions lie at residues 1–106 (MASK…IKED), 386–465 (KEDL…SKKA), 666–765 (LAKK…SVEV), and 778–820 (KEAF…ALTA). Residues 92-101 (ESPQTTTRLS) are compositionally biased toward polar residues. Residues 94-670 (PQTTTRLSQI…LEEAILAKKQ (577 aa)) adopt a coiled-coil conformation. Basic and acidic residues-rich tracts occupy residues 402-465 (EVSK…SKKA), 698-718 (NGHR…HEPP), and 732-753 (MEEK…KKDE). Residues 754–763 (SQDDDKDDSV) are compositionally biased toward acidic residues. A compositionally biased stretch (basic and acidic residues) spans 778 to 788 (KEAFPDKKSEL). S790 carries the post-translational modification Phosphoserine. A compositionally biased stretch (basic and acidic residues) spans 797–807 (SSKIDESDKTS).

Belongs to the WEB family.

It is found in the plastid. It localises to the chloroplast. The protein is WEB family protein At5g16730, chloroplastic of Arabidopsis thaliana (Mouse-ear cress).